A 566-amino-acid polypeptide reads, in one-letter code: Arginine--tRNA ligase (566 aa).

A 'HIGH' region motif is present at residues 123–133; the sequence is PNVAKPFHVGH.

Belongs to the class-I aminoacyl-tRNA synthetase family. As to quaternary structure, monomer.

Its subcellular location is the cytoplasm. It carries out the reaction tRNA(Arg) + L-arginine + ATP = L-arginyl-tRNA(Arg) + AMP + diphosphate. This Alkaliphilus metalliredigens (strain QYMF) protein is Arginine--tRNA ligase.